The chain runs to 299 residues: tRNA dimethylallyltransferase (299 aa).

10 to 17 (GATATGKS) contacts ATP. 12 to 17 (TATGKS) serves as a coordination point for substrate. Positions 35–38 (DSRQ) are interaction with substrate tRNA.

It belongs to the IPP transferase family. As to quaternary structure, monomer. Mg(2+) is required as a cofactor.

The enzyme catalyses adenosine(37) in tRNA + dimethylallyl diphosphate = N(6)-dimethylallyladenosine(37) in tRNA + diphosphate. Its function is as follows. Catalyzes the transfer of a dimethylallyl group onto the adenine at position 37 in tRNAs that read codons beginning with uridine, leading to the formation of N6-(dimethylallyl)adenosine (i(6)A). The polypeptide is tRNA dimethylallyltransferase (Rippkaea orientalis (strain PCC 8801 / RF-1) (Cyanothece sp. (strain PCC 8801))).